Reading from the N-terminus, the 528-residue chain is Peptide chain release factor 3 (528 aa).

In terms of domain architecture, tr-type G spans 11–279 (SDRRTFAIIS…GFVEWAPAPI (269 aa)). GTP contacts are provided by residues 20–27 (SHPDAGKT), 88–92 (DTPGH), and 142–145 (NKMD).

The protein belongs to the TRAFAC class translation factor GTPase superfamily. Classic translation factor GTPase family. PrfC subfamily.

The protein localises to the cytoplasm. Its function is as follows. Increases the formation of ribosomal termination complexes and stimulates activities of RF-1 and RF-2. It binds guanine nucleotides and has strong preference for UGA stop codons. It may interact directly with the ribosome. The stimulation of RF-1 and RF-2 is significantly reduced by GTP and GDP, but not by GMP. The chain is Peptide chain release factor 3 from Marinomonas sp. (strain MWYL1).